We begin with the raw amino-acid sequence, 242 residues long: Myogenic factor 6 (242 aa).

The tract at residues 31–63 (SPLYPGSDGTLSPCQDQMPQEAGSDSSGEEHVL) is disordered. The span at 39–56 (GTLSPCQDQMPQEAGSDS) shows a compositional bias: polar residues. The region spanning 93–144 (DRRKAATLRERRRLKKINEAFEALKRRTVANPNQRLPKVEILRSAISYIERL) is the bHLH domain.

As to quaternary structure, efficient DNA binding requires dimerization with another bHLH protein. Interacts with CSRP3. Skeletal muscle.

It localises to the nucleus. In terms of biological role, involved in muscle differentiation (myogenic factor). Induces fibroblasts to differentiate into myoblasts. Probable sequence specific DNA-binding protein. The protein is Myogenic factor 6 (Myf6) of Mus musculus (Mouse).